The following is a 188-amino-acid chain: Probable DNA-directed RNA polymerase subunit delta (188 aa).

One can recognise an HTH HARE-type domain in the interval 14–83 (LSMIEVARAI…GENKWGLRSW (70 aa)). Residues 119-188 (EDAIDYSADD…EDEEDEEEEE (70 aa)) are disordered.

This sequence belongs to the RpoE family. In terms of assembly, RNAP is composed of a core of 2 alpha, a beta and a beta' subunits. The core is associated with a delta subunit and one of several sigma factors.

In terms of biological role, participates in both the initiation and recycling phases of transcription. In the presence of the delta subunit, RNAP displays an increased specificity of transcription, a decreased affinity for nucleic acids, and an increased efficiency of RNA synthesis because of enhanced recycling. This Streptococcus equi subsp. equi (strain 4047) protein is Probable DNA-directed RNA polymerase subunit delta.